We begin with the raw amino-acid sequence, 203 residues long: Imidazoleglycerol-phosphate dehydratase (203 aa).

Belongs to the imidazoleglycerol-phosphate dehydratase family.

Its subcellular location is the cytoplasm. The enzyme catalyses D-erythro-1-(imidazol-4-yl)glycerol 3-phosphate = 3-(imidazol-4-yl)-2-oxopropyl phosphate + H2O. Its pathway is amino-acid biosynthesis; L-histidine biosynthesis; L-histidine from 5-phospho-alpha-D-ribose 1-diphosphate: step 6/9. In Deinococcus geothermalis (strain DSM 11300 / CIP 105573 / AG-3a), this protein is Imidazoleglycerol-phosphate dehydratase.